The sequence spans 382 residues: Ribosomal RNA large subunit methyltransferase G (382 aa).

The protein belongs to the methyltransferase superfamily. RlmG family.

It is found in the cytoplasm. The catalysed reaction is guanosine(1835) in 23S rRNA + S-adenosyl-L-methionine = N(2)-methylguanosine(1835) in 23S rRNA + S-adenosyl-L-homocysteine + H(+). Its function is as follows. Specifically methylates the guanine in position 1835 (m2G1835) of 23S rRNA. The chain is Ribosomal RNA large subunit methyltransferase G from Psychromonas ingrahamii (strain DSM 17664 / CCUG 51855 / 37).